A 305-amino-acid polypeptide reads, in one-letter code: MIKQRTLKCIVQATGVGLHTGKKVTLTLRPAPANTGVIYRRTDLNPPVDFPADAKSVRDTMLCTCLVNEHDVRISTVEHLNAALAGLGIDNIVIEVNAPEIPIMDGSAAPFVYLLLDAGIDELNCAKKFVRIKETVRVEDGDKWAEFKPYNGFSLDFTIDFNHPAIDSSNQRYAMNFSADAFMRQISRARTFGFMRDIEYLQSRGLCLGGSFDCAIVVDDYRVLNEDGLRFEDEFVRHKMLDAIGDLFMCGHNIIGAFTAYKSGHALNNKLLQAVLAKQEAWEYVTFQDDAELPLAFKAPSAVLA.

Zn(2+) contacts are provided by His-79, His-238, and Asp-242. His-265 acts as the Proton donor in catalysis.

Belongs to the LpxC family. Zn(2+) is required as a cofactor.

It carries out the reaction a UDP-3-O-[(3R)-3-hydroxyacyl]-N-acetyl-alpha-D-glucosamine + H2O = a UDP-3-O-[(3R)-3-hydroxyacyl]-alpha-D-glucosamine + acetate. It participates in glycolipid biosynthesis; lipid IV(A) biosynthesis; lipid IV(A) from (3R)-3-hydroxytetradecanoyl-[acyl-carrier-protein] and UDP-N-acetyl-alpha-D-glucosamine: step 2/6. Functionally, catalyzes the hydrolysis of UDP-3-O-myristoyl-N-acetylglucosamine to form UDP-3-O-myristoylglucosamine and acetate, the committed step in lipid A biosynthesis. The chain is UDP-3-O-acyl-N-acetylglucosamine deacetylase from Escherichia coli O45:K1 (strain S88 / ExPEC).